Consider the following 406-residue polypeptide: MADSQLFCVAEERSGHCAVVDGNFLYVWGGYVSIEDNEVYLPNDEIWTYDIDSGLWRMHLMEGELPASMSGSCGACINGKLYIFGGYDDKGYSNRLYFVNLRTRDETYIWEKITDFEGQPPTPRDKLSCWVYKDRLIYFGGYGCRRHSELQDCFDVHDASWEEQIFWGWHNDVHIFDTKTQTWFQPEIKGGVPPQPRAAHTCAVLGNKGYIFGGRVLQTRMNDLHYLNLDTWTWSGRITINGESPKHRSWHTLTPIADDKLFLCGGLSADNIPLSDGWIHNVTTNCWKQLTHLPKTRPRLWHTACLGKENEIMVFGGSKDDLLALDTGHCNDLLIFQTQPYSLLRSCLDCIGKNSIMLESQISLLPPKLLQQVLKKITFWAAANHREEQRVQKEETENKYQWISSN.

6 Kelch repeats span residues 24–76 (FLYV…CGAC), 80–134 (KLYI…VYKD), 135–181 (RLIY…TKTQ), 208–258 (KGYI…PIAD), 260–307 (KLFL…ACLG), and 311–361 (EIMV…LESQ).

In terms of assembly, component of a CRL5 E3 ubiquitin-protein ligase complex, also named ECS (Elongin BC-CUL2/5-SOCS-box protein) complex, composed of CUL5, Elongin BC (ELOB and ELOC), RBX1 and substrate-specific adapter KLHDC1. As to expression, widely expressed, with high levels in skeletal muscle, pancreas and liver. Undetectable in peripheral blood leukocytes.

It is found in the cytoplasm. The protein resides in the cytosol. It participates in protein modification; protein ubiquitination. Its function is as follows. Substrate-recognition component of a Cul5-RING (CRL5) E3 ubiquitin-protein ligase complex of the DesCEND (destruction via C-end degrons) pathway, which recognizes a C-degron located at the extreme C terminus of target proteins, leading to their ubiquitination and degradation. The C-degron recognized by the DesCEND pathway is usually a motif of less than ten residues and can be present in full-length proteins, truncated proteins or proteolytically cleaved forms. The CRL5(KLHDC1) complex mediates ubiquitination and degradation of truncated SELENOS selenoprotein produced by failed UGA/Sec decoding, which ends with a glycine. The polypeptide is Kelch domain-containing protein 1 (Homo sapiens (Human)).